The primary structure comprises 282 residues: Autophagy protein 5 (282 aa).

Residue K144 forms a Glycyl lysine isopeptide (Lys-Gly) (interchain with G-Cter in ATG12) linkage.

It belongs to the ATG5 family. Conjugated with ATG12. In terms of processing, conjugated to ATG12; which is essential for autophagy.

The protein localises to the preautophagosomal structure membrane. Its function is as follows. Involved in cytoplasm to vacuole transport (Cvt) and autophagic vesicle formation. Autophagy is essential for maintenance of amino acid levels and protein synthesis under nitrogen starvation. Required for selective autophagic degradation of the nucleus (nucleophagy). Also required for mitophagy, which eliminates defective or superfluous mitochondria in order to fulfill cellular energy requirements and prevent excess ROS production. Conjugation with ATG12, through a ubiquitin-like conjugating system involving ATG7 as an E1-like activating enzyme and ATG10 as an E2-like conjugating enzyme, is essential for its function. The ATG12-ATG5 conjugate acts as an E3-like enzyme which is required for lipidation of ATG8 and ATG8 association to the vesicle membranes. This is Autophagy protein 5 (ATG5) from Scheffersomyces stipitis (strain ATCC 58785 / CBS 6054 / NBRC 10063 / NRRL Y-11545) (Yeast).